Here is a 241-residue protein sequence, read N- to C-terminus: MEKAVHSSTTSGPAVPGETTKTGTSIIDTAASAVQSFAPVNQIHQHLCAFHFYADDMARQVEAHHFCSHVNEEMRQCLIYDGPDANARLIGLEYIVSEKLFMTLPDEEKKLWHSHEWEVKGGFLFMPGVPGAIQRKDLDKVAKTYGKVFHFWQVDLGHELPIGLPNVMMAVTRDGQLFHEMIQEAEKRFGVSVEGERDSRAYMSGPELGIHPLANGGGKGMKLELREVDIKPVESVGSVFV.

Over residues 1–12 (MEKAVHSSTTSG) the composition is skewed to polar residues. Positions 1 to 22 (MEKAVHSSTTSGPAVPGETTKT) are disordered.

This sequence belongs to the OBAP family.

This chain is Oil body-associated protein 1B, found in Arabidopsis thaliana (Mouse-ear cress).